The primary structure comprises 340 residues: Ribonucleoside-diphosphate reductase subunit beta (340 aa).

Residues aspartate 88 and histidine 122 each coordinate Fe cation. Tyrosine 126 is a catalytic residue. Fe cation is bound at residue histidine 216.

It belongs to the ribonucleoside diphosphate reductase small chain family. In terms of assembly, tetramer of two alpha and two beta subunits. It depends on Fe cation as a cofactor.

The enzyme catalyses a 2'-deoxyribonucleoside 5'-diphosphate + [thioredoxin]-disulfide + H2O = a ribonucleoside 5'-diphosphate + [thioredoxin]-dithiol. Provides the precursors necessary for DNA synthesis. Catalyzes the biosynthesis of deoxyribonucleotides from the corresponding ribonucleotides. The chain is Ribonucleoside-diphosphate reductase subunit beta (nrdF) from Mycoplasma genitalium (strain ATCC 33530 / DSM 19775 / NCTC 10195 / G37) (Mycoplasmoides genitalium).